A 337-amino-acid polypeptide reads, in one-letter code: Inositol 2-dehydrogenase 1 (337 aa).

Belongs to the Gfo/Idh/MocA family. Homotetramer.

It carries out the reaction myo-inositol + NAD(+) = scyllo-inosose + NADH + H(+). In terms of biological role, involved in the oxidation of myo-inositol (MI) to 2-keto-myo-inositol (2KMI or 2-inosose). The sequence is that of Inositol 2-dehydrogenase 1 from Paenarthrobacter aurescens (strain TC1).